The chain runs to 220 residues: Phosphoribosylformylglycinamidine synthase subunit PurQ (220 aa).

The 219-residue stretch at Arg2–Val220 folds into the Glutamine amidotransferase type-1 domain. The Nucleophile role is filled by Cys85. Active-site residues include His193 and Glu195.

In terms of assembly, part of the FGAM synthase complex composed of 1 PurL, 1 PurQ and 2 PurS subunits.

It localises to the cytoplasm. It carries out the reaction N(2)-formyl-N(1)-(5-phospho-beta-D-ribosyl)glycinamide + L-glutamine + ATP + H2O = 2-formamido-N(1)-(5-O-phospho-beta-D-ribosyl)acetamidine + L-glutamate + ADP + phosphate + H(+). It catalyses the reaction L-glutamine + H2O = L-glutamate + NH4(+). It functions in the pathway purine metabolism; IMP biosynthesis via de novo pathway; 5-amino-1-(5-phospho-D-ribosyl)imidazole from N(2)-formyl-N(1)-(5-phospho-D-ribosyl)glycinamide: step 1/2. Functionally, part of the phosphoribosylformylglycinamidine synthase complex involved in the purines biosynthetic pathway. Catalyzes the ATP-dependent conversion of formylglycinamide ribonucleotide (FGAR) and glutamine to yield formylglycinamidine ribonucleotide (FGAM) and glutamate. The FGAM synthase complex is composed of three subunits. PurQ produces an ammonia molecule by converting glutamine to glutamate. PurL transfers the ammonia molecule to FGAR to form FGAM in an ATP-dependent manner. PurS interacts with PurQ and PurL and is thought to assist in the transfer of the ammonia molecule from PurQ to PurL. This chain is Phosphoribosylformylglycinamidine synthase subunit PurQ, found in Rubrobacter xylanophilus (strain DSM 9941 / JCM 11954 / NBRC 16129 / PRD-1).